The chain runs to 246 residues: NLP effector protein Pc118548 (246 aa).

The signal sequence occupies residues 1-19 (MNFRAFLLAAIAGIATINA). A Hepta-peptide GHRHDWE motif motif is present at residues 122-128 (GHRHYWE). N141 carries N-linked (GlcNAc...) asparagine glycosylation.

Belongs to the Necrosis inducing protein (NPP1) family.

Its subcellular location is the secreted. Its function is as follows. Secreted effector that contributes strongly to virulence during infection by P.capsici. Induces cell death in the Solanaceae, including Nicotiana benthamiana and hot pepper. This is NLP effector protein Pc118548 from Phytophthora capsici.